The primary structure comprises 284 residues: Trimeric intracellular cation channel type B-B (284 aa).

Residues 1 to 15 (MESLSEVSVQFSQLS) are Lumenal-facing. A helical transmembrane segment spans residues 16 to 32 (MFPFFDMAHYLASVMSA). Residues 33–44 (REQAGALDIASH) lie on the Cytoplasmic side of the membrane. A helical transmembrane segment spans residues 45–68 (SPMASWFSAMLHCFGGGILSSILL). At 69–79 (AEPPVGILANT) the chain is on the lumenal side. The helical transmembrane segment at 80 to 99 (TNIMLASAIWYMVYYFPYDL) threads the bilayer. Residues 100–102 (FYN) are Cytoplasmic-facing. Residues 103–121 (CFFFLPIRLIAAGMKEVTR) traverse the membrane as a helical segment. Residues lysine 117 and arginine 121 each contribute to the a 1,2-diacyl-sn-glycero-3-phospho-(1D-myo-inositol-4,5-bisphosphate) site. Residues 122–139 (TWKILSGITHAHSHYKDA) are Lumenal-facing. The helical transmembrane segment at 140 to 157 (WLVMITIGWARGAGGGLI) threads the bilayer. The Cytoplasmic segment spans residues 158–178 (SNFEQLVRGVWKPESNEFLKM). The helical transmembrane segment at 179–196 (SYPVKVTLIGAVLFTLQH) threads the bilayer. Residues 197–204 (GHYLPISR) are Lumenal-facing. Residues 205–225 (HNLMFIYTMFLVSIKVTMMLT) form a helical membrane-spanning segment. The Cytoplasmic segment spans residues 226–284 (HSAGSPFLPLETPLHRILFGLRQNQAEVRESPSSSGAKGKPSKKTLDKDSGEQSNKKDK). The segment at 250-284 (QAEVRESPSSSGAKGKPSKKTLDKDSGEQSNKKDK) is disordered. Basic and acidic residues predominate over residues 269–284 (KTLDKDSGEQSNKKDK).

The protein belongs to the TMEM38 family. Homotrimer; conformation seems to be controled by binding to diacylglycerol (DAG).

Its subcellular location is the endoplasmic reticulum membrane. The enzyme catalyses K(+)(in) = K(+)(out). Its activity is regulated as follows. Channel activity is activated by increased cytosolic Ca(2+) levels and blocked by luminal high Ca(2+) levels. Intracellular monovalent cation channel required for maintenance of rapid intracellular calcium release. Acts as a potassium counter-ion channel that functions in synchronization with calcium release from intracellular stores. Activated by increased cytosolic Ca(2+) levels. This chain is Trimeric intracellular cation channel type B-B (tmem38b-b), found in Xenopus laevis (African clawed frog).